Consider the following 319-residue polypeptide: HTH-type transcriptional regulator YidZ (319 aa).

The HTH lysR-type domain maps to 8-65 (LDLNLLLCLQLLMQERSVTKAAKRMNVTPSAVSKSLSKLRTWFDDPLFVNTPLGLTPT). A DNA-binding region (H-T-H motif) is located at residues 25 to 44 (VTKAAKRMNVTPSAVSKSLS).

This sequence belongs to the LysR transcriptional regulatory family.

Its function is as follows. Involved in anaerobic NO protection. The protein is HTH-type transcriptional regulator YidZ of Citrobacter koseri (strain ATCC BAA-895 / CDC 4225-83 / SGSC4696).